Reading from the N-terminus, the 179-residue chain is SCAN domain-containing protein 1 (179 aa).

Positions 1 to 107 (MAATEPILAT…AGSRLGPETF (107 aa)) are disordered. Residues 52-80 (SPNAAVPEAIPTPRAAASAALELPLGPAP) are compositionally biased toward low complexity. In terms of domain architecture, SCAN box spans 108–166 (RQRFRQFRYQDAAGPREAFRQLRELSRQWLRPDIRTKEQIVEMLVQEQLLAILPEAARA).

Interacts with ZNF202.

It is found in the nucleus. Functionally, may regulate transcriptional activity. This chain is SCAN domain-containing protein 1 (SCAND1), found in Pan paniscus (Pygmy chimpanzee).